The following is a 75-amino-acid chain: DNA-directed RNA polymerase subunit omega (75 aa).

It belongs to the RNA polymerase subunit omega family. In terms of assembly, in cyanobacteria the RNAP catalytic core is composed of 2 alpha, 1 beta, 1 beta', 1 gamma and 1 omega subunit. When a sigma factor is associated with the core the holoenzyme is formed, which can initiate transcription.

The catalysed reaction is RNA(n) + a ribonucleoside 5'-triphosphate = RNA(n+1) + diphosphate. Promotes RNA polymerase assembly. Latches the N- and C-terminal regions of the beta' subunit thereby facilitating its interaction with the beta and alpha subunits. The sequence is that of DNA-directed RNA polymerase subunit omega from Synechococcus sp. (strain CC9605).